Consider the following 326-residue polypeptide: Biotin synthase (326 aa).

The 228-residue stretch at 51-278 (NRVQVSRLIS…KSFVRLSAGR (228 aa)) folds into the Radical SAM core domain. Residues C66, C70, and C73 each contribute to the [4Fe-4S] cluster site. [2Fe-2S] cluster-binding residues include C110, C141, C201, and R273.

This sequence belongs to the radical SAM superfamily. Biotin synthase family. As to quaternary structure, homodimer. The cofactor is [4Fe-4S] cluster. Requires [2Fe-2S] cluster as cofactor.

The enzyme catalyses (4R,5S)-dethiobiotin + (sulfur carrier)-SH + 2 reduced [2Fe-2S]-[ferredoxin] + 2 S-adenosyl-L-methionine = (sulfur carrier)-H + biotin + 2 5'-deoxyadenosine + 2 L-methionine + 2 oxidized [2Fe-2S]-[ferredoxin]. It functions in the pathway cofactor biosynthesis; biotin biosynthesis; biotin from 7,8-diaminononanoate: step 2/2. Catalyzes the conversion of dethiobiotin (DTB) to biotin by the insertion of a sulfur atom into dethiobiotin via a radical-based mechanism. The protein is Biotin synthase of Paramagnetospirillum magneticum (strain ATCC 700264 / AMB-1) (Magnetospirillum magneticum).